The primary structure comprises 156 residues: Small ribosomal subunit protein uS7 (156 aa).

This sequence belongs to the universal ribosomal protein uS7 family. In terms of assembly, part of the 30S ribosomal subunit. Contacts proteins S9 and S11.

One of the primary rRNA binding proteins, it binds directly to 16S rRNA where it nucleates assembly of the head domain of the 30S subunit. Is located at the subunit interface close to the decoding center, probably blocks exit of the E-site tRNA. The chain is Small ribosomal subunit protein uS7 from Hyphomonas neptunium (strain ATCC 15444).